The sequence spans 342 residues: viral G-protein coupled receptor (342 aa).

Over 1–51 the chain is Extracellular; the sequence is MAAEDFLTIFLDDDESWNETLNMSGYDYSGNFSLEVSVCEMTTVVPYTWNV. 3 N-linked (GlcNAc...) asparagine; by host glycosylation sites follow: N18, N22, and N31. Residues 52 to 72 traverse the membrane as a helical segment; that stretch reads GILSLIFLINVLGNGLVTYIF. The Cytoplasmic portion of the chain corresponds to 73–92; sequence CKHRSRAGAIDILLLGICLN. The helical transmembrane segment at 93 to 113 threads the bilayer; it reads SLCLSISLLAEVLMFLFPNII. Topologically, residues 114-121 are extracellular; sequence STGLCRLE. Residues 122–142 form a helical membrane-spanning segment; sequence IFFYYLYVYLDIFSVVCVSLV. Residues 143–159 lie on the Cytoplasmic side of the membrane; sequence RYLLVAYSTRSWPKKQS. Residues 160 to 180 form a helical membrane-spanning segment; that stretch reads LGWVLTSAALLIALVLSGDAC. Topologically, residues 181 to 217 are extracellular; it reads RHRSRVVDPVSKQAMCYENAGNMTADWRLHVRTVSVT. A helical transmembrane segment spans residues 218-238; the sequence is AGFLLPLALLILFYALTWCVV. The Cytoplasmic segment spans residues 239–251; it reads RRTKLQARRKVRG. The helical transmembrane segment at 252–272 threads the bilayer; it reads VIVAVVLLFFVFCFPYHVLNL. Over 273 to 293 the chain is Extracellular; that stretch reads LDTLLRRRWIRDSCYTRGLIN. A helical transmembrane segment spans residues 294–314; it reads VGLAVTSLLQALYSAVVPLIY. The Cytoplasmic segment spans residues 315 to 342; it reads SCLGSLFRQRMYGLFQSLRQSFMSGATT.

This sequence belongs to the G-protein coupled receptor 1 family. In terms of assembly, interacts with protein K7; this interaction promotes vGPCR proteasomal degradation. Interacts with host CADM1; this interaction is essential for chronic NF-kappa-B activation.

It localises to the host cell membrane. Its function is as follows. Receptor that signals constitutively via several signaling pathways including PI3K/AKT as well as mitogen- and stress-activated/MAP kinases. Promotes host cell proliferation and survival, modulates cell migration, stimulates angiogenesis, and recruits inflammatory cells, both in expressing cells and in neighboring cells. Maintains chronic activation of NF-kappa-B via interaction with host CADM1. The polypeptide is viral G-protein coupled receptor (ORF74) (Human herpesvirus 8 type P (isolate GK18) (HHV-8)).